Here is a 141-residue protein sequence, read N- to C-terminus: Nucleoside diphosphate kinase (141 aa).

Residues K11, F59, R87, T93, R104, and N114 each contribute to the ATP site. The Pros-phosphohistidine intermediate role is filled by H117.

The protein belongs to the NDK family. In terms of assembly, homotetramer. Mg(2+) is required as a cofactor.

The protein localises to the cytoplasm. The enzyme catalyses a 2'-deoxyribonucleoside 5'-diphosphate + ATP = a 2'-deoxyribonucleoside 5'-triphosphate + ADP. The catalysed reaction is a ribonucleoside 5'-diphosphate + ATP = a ribonucleoside 5'-triphosphate + ADP. Functionally, major role in the synthesis of nucleoside triphosphates other than ATP. The ATP gamma phosphate is transferred to the NDP beta phosphate via a ping-pong mechanism, using a phosphorylated active-site intermediate. This chain is Nucleoside diphosphate kinase, found in Paraburkholderia xenovorans (strain LB400).